The primary structure comprises 225 residues: Ribose-5-phosphate isomerase A (225 aa).

Residues 32 to 35, 85 to 88, and 98 to 101 contribute to the substrate site; these read TGST, DGAD, and KGGG. Glutamate 107 functions as the Proton acceptor in the catalytic mechanism. A substrate-binding site is contributed by lysine 125.

The protein belongs to the ribose 5-phosphate isomerase family. In terms of assembly, homodimer.

It carries out the reaction aldehydo-D-ribose 5-phosphate = D-ribulose 5-phosphate. It functions in the pathway carbohydrate degradation; pentose phosphate pathway; D-ribose 5-phosphate from D-ribulose 5-phosphate (non-oxidative stage): step 1/1. In terms of biological role, catalyzes the reversible conversion of ribose-5-phosphate to ribulose 5-phosphate. In Marinobacter nauticus (strain ATCC 700491 / DSM 11845 / VT8) (Marinobacter aquaeolei), this protein is Ribose-5-phosphate isomerase A.